The primary structure comprises 62 residues: Small ribosomal subunit protein uS14 (62 aa).

Zn(2+) is bound by residues Cys-25, Cys-28, Cys-41, and Cys-44.

The protein belongs to the universal ribosomal protein uS14 family. Zinc-binding uS14 subfamily. In terms of assembly, part of the 30S ribosomal subunit. Contacts proteins S3 and S10. Zn(2+) is required as a cofactor.

Binds 16S rRNA, required for the assembly of 30S particles and may also be responsible for determining the conformation of the 16S rRNA at the A site. The protein is Small ribosomal subunit protein uS14 of Sulfurihydrogenibium sp. (strain YO3AOP1).